The sequence spans 714 residues: Glycine--tRNA ligase beta subunit (714 aa).

It belongs to the class-II aminoacyl-tRNA synthetase family. In terms of assembly, tetramer of two alpha and two beta subunits.

The protein localises to the cytoplasm. It carries out the reaction tRNA(Gly) + glycine + ATP = glycyl-tRNA(Gly) + AMP + diphosphate. In Rhodospirillum centenum (strain ATCC 51521 / SW), this protein is Glycine--tRNA ligase beta subunit.